The following is an 860-amino-acid chain: Late endosome and vacuole interface protein 11 (860 aa).

The interval 19-45 (EIINNSDHSSSHSTSHEEEDEEEDDTE) is disordered. Over residues 20 to 31 (IINNSDHSSSHS) the composition is skewed to low complexity. Residues 35–45 (EEEDEEEDDTE) are compositionally biased toward acidic residues. The BED-type zinc finger occupies 84–138 (KNIAKFWSHFLAIEKKLTKVKCKHCGEILTRSDASLTKTFRSHLKTKHNISANKN). Residues Cys-105, Cys-108, His-126, and His-131 each contribute to the Zn(2+) site.

Belongs to the VID22 family.

Its subcellular location is the nucleus. Involved in vacuolar processing and morphology. This Saccharomyces cerevisiae (strain ATCC 204508 / S288c) (Baker's yeast) protein is Late endosome and vacuole interface protein 11 (ENV11).